The primary structure comprises 292 residues: Elongation factor Ts (292 aa).

Residues 79–82 are involved in Mg(2+) ion dislocation from EF-Tu; sequence TDFV.

It belongs to the EF-Ts family.

The protein resides in the cytoplasm. In terms of biological role, associates with the EF-Tu.GDP complex and induces the exchange of GDP to GTP. It remains bound to the aminoacyl-tRNA.EF-Tu.GTP complex up to the GTP hydrolysis stage on the ribosome. This chain is Elongation factor Ts, found in Malacoplasma penetrans (strain HF-2) (Mycoplasma penetrans).